A 336-amino-acid chain; its full sequence is DNA-directed RNA polymerase subunit alpha (336 aa).

Positions 1–232 (MIQKNWQELI…DQLSVFVNFD (232 aa)) are alpha N-terminal domain (alpha-NTD). The tract at residues 248–336 (FNPALLKKVD…DLAKRYEDQY (89 aa)) is alpha C-terminal domain (alpha-CTD).

Belongs to the RNA polymerase alpha chain family. Homodimer. The RNAP catalytic core consists of 2 alpha, 1 beta, 1 beta' and 1 omega subunit. When a sigma factor is associated with the core the holoenzyme is formed, which can initiate transcription.

The catalysed reaction is RNA(n) + a ribonucleoside 5'-triphosphate = RNA(n+1) + diphosphate. In terms of biological role, DNA-dependent RNA polymerase catalyzes the transcription of DNA into RNA using the four ribonucleoside triphosphates as substrates. In Sinorhizobium fredii (strain NBRC 101917 / NGR234), this protein is DNA-directed RNA polymerase subunit alpha.